We begin with the raw amino-acid sequence, 846 residues long: Protein kintoun (846 aa).

Disordered stretches follow at residues 1–21 (MSTAAGSRKKHSKLHNEERAD), 372–416 (YLSR…PALT), 581–657 (HTSI…DSTI), and 743–846 (HDSS…DDEI). Position 378 is a phosphoserine (Ser378). Residues 389-403 (PVEDDADGDMPETPE) are compositionally biased toward acidic residues. 2 stretches are compositionally biased toward basic residues: residues 596 to 612 (LHKKPSKKQRKRNKKQR) and 750 to 766 (QRKKNQKRRNCKLRAQQ). Ser770 carries the post-translational modification Phosphoserine. The span at 821–832 (TRQDHADADAKN) shows a compositional bias: basic and acidic residues.

Belongs to the PIH1 family. Kintoun subfamily. Interacts with Pp1alpha-96A, Pp1-87B, Pp1-13C and flw.

The protein localises to the cytoplasm. Required for cytoplasmic pre-assembly of axonemal dyneins, thereby playing a central role in motility in cilia and flagella. Involved in pre-assembly of dynein arm complexes in the cytoplasm before intraflagellar transport loads them for the ciliary compartment. This chain is Protein kintoun, found in Drosophila persimilis (Fruit fly).